Consider the following 2155-residue polypeptide: Conidial pigment polyketide synthase PfmaE (2155 aa).

The interval 8-245 (LLFGDQSLDT…TAIPVYGPYH (238 aa)) is N-terminal acylcarrier protein transacylase domain (SAT). The region spanning 381 to 813 (KCKLAIVGMA…GGNTGLLLED (433 aa)) is the Ketosynthase family 3 (KS3) domain. Active-site for beta-ketoacyl synthase activity residues include Cys-553, His-688, and His-731. A malonyl-CoA:ACP transacylase (MAT) domain region spans residues 910-1231 (AFMFTGQGSH…LCTLHSAGLN (322 aa)). Ser-1001 functions as the For acyl/malonyl transferase activity in the catalytic mechanism. Positions 1293–1608 (TTTVQKVVRE…PRKVLNVVLP (316 aa)) are product template (PT) domain. Residues 1297–1428 (QKVVREEVKG…CKVFFGDNEE (132 aa)) form an N-terminal hotdog fold region. The PKS/mFAS DH domain maps to 1297–1604 (QKVVREEVKG…FQAIPRKVLN (308 aa)). His-1329 serves as the catalytic Proton acceptor; for dehydratase activity. Residues 1455–1604 (DASKIGRGLA…FQAIPRKVLN (150 aa)) are C-terminal hotdog fold. Residue Asp-1516 is the Proton donor; for dehydratase activity of the active site. 2 Carrier domains span residues 1653–1730 (LTKN…AQFE) and 1779–1856 (GNVS…GIED). Ser-1690 is modified (O-(pantetheine 4'-phosphoryl)serine). The disordered stretch occupies residues 1738–1782 (EENAHSSASSDSADMETESNFTTPSDDSEKDEVKGDAPAADGNVS). Residue Ser-1816 is modified to O-(pantetheine 4'-phosphoryl)serine. The disordered stretch occupies residues 1855 to 1892 (EDKPKRAAPKSAKQEPAKPEPKVQGEAKAHTNPVDNYP). Residues 1866 to 1883 (AKQEPAKPEPKVQGEAKA) show a composition bias toward basic and acidic residues. The interval 1911–2041 (QLFMIPDGSG…LGEGDDAEAK (131 aa)) is thioesterase (TE) domain.

Its pathway is pigment biosynthesis; melanin biosynthesis. Functionally, non-reducing polyketide synthase; part of the gene cluster that mediates the biosynthesis of dihydroxynaphthalene (DHN)-melanin, a bluish-green pigment forming a dark layer in the conidial wall that protects the conidia from UV radiations. The first step of the pathway is the production of the pentaketide 1,3,6,8-tetrahydroxynaphthalene (1,3,6,8-THN or T4HN) by the polyketide synthase PfmaE though condensation of acetyl-CoA with malonyl-CoA. T4HN is not stable and easily oxidizes into the stable form flaviolin. T4HN is also substrate of the hydroxynaphthalene reductase PfmaG to yield scytalone. The scytalone dehydratase PfmaJ then reduces scytalone to 1,3,8-THN. 1,3,8-THN is then substrate of the hydroxynaphthalene reductase PfmaI to yield vermelone. Vermelone is further converted by the multicopper oxidase PfmaD to 1,8-DHN. Finally the laccase PFICI_06862 transforms 1,8-DHN to DHN-melanin. The roles of the 5-oxoprolinase PfmaA and the proline iminopeptidase PfmaB within the cluster have not been elucidated yet. This Pestalotiopsis fici (strain W106-1 / CGMCC3.15140) protein is Conidial pigment polyketide synthase PfmaE.